We begin with the raw amino-acid sequence, 198 residues long: MSVPRVGVLALQGDTREHLAALRECGAEPMTVRRRDELDAVDALVIPGGESTTMSHLLLDLDLLGPLRARLADGLPAYGSCAGMILLASEILDAGAAGRQALPLRAMNMTVRRNAFGSQVDSFEGDIEFAGLDDPVRAVFIRAPWVERVGDGVQVLARAAGHIVAVRQGAVLATAFHPEMTGDRRIHQLFVDIVTSAA.

49-51 (GES) provides a ligand contact to L-glutamine. The active-site Nucleophile is C81. L-glutamine is bound by residues R113 and 141-142 (IR). Active-site charge relay system residues include H177 and E179.

Belongs to the glutaminase PdxT/SNO family. In terms of assembly, in the presence of PdxS, forms a dodecamer of heterodimers. Only shows activity in the heterodimer.

The catalysed reaction is aldehydo-D-ribose 5-phosphate + D-glyceraldehyde 3-phosphate + L-glutamine = pyridoxal 5'-phosphate + L-glutamate + phosphate + 3 H2O + H(+). The enzyme catalyses L-glutamine + H2O = L-glutamate + NH4(+). It participates in cofactor biosynthesis; pyridoxal 5'-phosphate biosynthesis. Functionally, catalyzes the hydrolysis of glutamine to glutamate and ammonia as part of the biosynthesis of pyridoxal 5'-phosphate. The resulting ammonia molecule is channeled to the active site of PdxS. In Mycobacterium tuberculosis (strain ATCC 25177 / H37Ra), this protein is Pyridoxal 5'-phosphate synthase subunit PdxT.